The sequence spans 529 residues: Bifunctional purine biosynthesis protein PurH (529 aa).

One can recognise an MGS-like domain in the interval 1–148; sequence MQQRRPVRRA…KNHKDVAIVV (148 aa). Position 287 is an N6-acetyllysine (lysine 287).

This sequence belongs to the PurH family.

It catalyses the reaction (6R)-10-formyltetrahydrofolate + 5-amino-1-(5-phospho-beta-D-ribosyl)imidazole-4-carboxamide = 5-formamido-1-(5-phospho-D-ribosyl)imidazole-4-carboxamide + (6S)-5,6,7,8-tetrahydrofolate. The catalysed reaction is IMP + H2O = 5-formamido-1-(5-phospho-D-ribosyl)imidazole-4-carboxamide. It participates in purine metabolism; IMP biosynthesis via de novo pathway; 5-formamido-1-(5-phospho-D-ribosyl)imidazole-4-carboxamide from 5-amino-1-(5-phospho-D-ribosyl)imidazole-4-carboxamide (10-formyl THF route): step 1/1. Its pathway is purine metabolism; IMP biosynthesis via de novo pathway; IMP from 5-formamido-1-(5-phospho-D-ribosyl)imidazole-4-carboxamide: step 1/1. This Escherichia coli O9:H4 (strain HS) protein is Bifunctional purine biosynthesis protein PurH.